Consider the following 227-residue polypeptide: ATP-dependent dethiobiotin synthetase BioD (227 aa).

13–18 (DIGKTY) lines the ATP pocket. Thr17 serves as a coordination point for Mg(2+). Lys38 is a catalytic residue. Residue Ser42 participates in substrate binding. Residues Asp55, 116-119 (EGSG), and 179-180 (NN) each bind ATP. Mg(2+) contacts are provided by Asp55 and Glu116.

The protein belongs to the dethiobiotin synthetase family. In terms of assembly, homodimer. Mg(2+) serves as cofactor.

It is found in the cytoplasm. The catalysed reaction is (7R,8S)-7,8-diammoniononanoate + CO2 + ATP = (4R,5S)-dethiobiotin + ADP + phosphate + 3 H(+). The protein operates within cofactor biosynthesis; biotin biosynthesis; biotin from 7,8-diaminononanoate: step 1/2. Its function is as follows. Catalyzes a mechanistically unusual reaction, the ATP-dependent insertion of CO2 between the N7 and N8 nitrogen atoms of 7,8-diaminopelargonic acid (DAPA, also called 7,8-diammoniononanoate) to form a ureido ring. This chain is ATP-dependent dethiobiotin synthetase BioD, found in Clostridium botulinum (strain Okra / Type B1).